Here is a 139-residue protein sequence, read N- to C-terminus: Putative pre-16S rRNA nuclease (139 aa).

Belongs to the YqgF nuclease family.

It localises to the cytoplasm. In terms of biological role, could be a nuclease involved in processing of the 5'-end of pre-16S rRNA. This Proteus mirabilis (strain HI4320) protein is Putative pre-16S rRNA nuclease.